The primary structure comprises 425 residues: Ribosome biogenesis protein WDR12 homolog (425 aa).

Positions 7–93 (IQAKFFTKDE…ETIVHLEYLE (87 aa)) are ubiquitin-like (UBL) domain. WD repeat units follow at residues 105–142 (IHDDWVSAVHASEAGILSGCYDNTLHIWDTATGTRRLT), 145–187 (GHLG…NAVE), 194–233 (GHARSVDCVDVSWNGAKFVTGSFDHMLKVWSADPDSTDTD), 265–303 (GHHEAVTGVQWTDEGEVATCSMDHTLRIWDVELGGMKSQ), 305–344 (AGSKAFLGISYSRLNRQIVSASSDRHVRLWDPRTKDGTIV), 350–390 (SHAG…APLY), and 394–425 (GHEDKVLAVDWSLGKYMISGGADNQLKIFEHK). The segment at 227–253 (PDSTDTDHGQDGSEEGSRKKQKTVDGK) is disordered. Basic and acidic residues predominate over residues 231-253 (DTDHGQDGSEEGSRKKQKTVDGK).

This sequence belongs to the WD repeat WDR12/YTM1 family.

Its subcellular location is the nucleus. It localises to the nucleolus. The protein localises to the nucleoplasm. Functionally, required for maturation of ribosomal RNAs and formation of the large ribosomal subunit. The polypeptide is Ribosome biogenesis protein WDR12 homolog (Ixodes scapularis (Black-legged tick)).